The chain runs to 201 residues: Coiled-coil domain-containing protein 195 (201 aa).

Residues 4-38 (DIQLMRLIQEMRAEIHKLEKENQALRMKLTASSQR) adopt a coiled-coil conformation. Disordered stretches follow at residues 28–72 (LRMK…DAAP) and 179–201 (SKNS…IIAE). A compositionally biased stretch (low complexity) spans 179 to 188 (SKNSSSLKHS). Over residues 189-201 (PNQATNQLSIIAE) the composition is skewed to polar residues.

This chain is Coiled-coil domain-containing protein 195, found in Homo sapiens (Human).